A 476-amino-acid chain; its full sequence is Probable rhodanese domain-containing dual specificity protein phosphatase (476 aa).

In terms of domain architecture, Rhodanese spans 32–190 (IGSSKIIIDL…FQKDYSFMCN (159 aa)). Positions 208–350 (YPSEIIKDFL…LKDYQQHLTL (143 aa)) constitute a Tyrosine-protein phosphatase domain. The active-site Phosphocysteine intermediate is Cys-294. Residues 425 to 436 (KTTTSSTTINNK) are compositionally biased toward low complexity. Positions 425–476 (KTTTSSTTINNKGQQQDKAQEEKDSIFSYADKQEKMTHPTLHSPIELPQSSL) are disordered. The span at 442-461 (KAQEEKDSIFSYADKQEKMT) shows a compositional bias: basic and acidic residues.

This sequence belongs to the protein-tyrosine phosphatase family. Non-receptor class dual specificity subfamily.

It carries out the reaction O-phospho-L-tyrosyl-[protein] + H2O = L-tyrosyl-[protein] + phosphate. The enzyme catalyses O-phospho-L-seryl-[protein] + H2O = L-seryl-[protein] + phosphate. It catalyses the reaction O-phospho-L-threonyl-[protein] + H2O = L-threonyl-[protein] + phosphate. Functionally, has a dual specificity toward Ser/Thr and Tyr-containing proteins. This Dictyostelium discoideum (Social amoeba) protein is Probable rhodanese domain-containing dual specificity protein phosphatase.